We begin with the raw amino-acid sequence, 171 residues long: MQDEAVTENTASTGPQAGPPLVVNVQYVKDLSFEVPGAPQIFAALRTQPQVDLNLDVQVRRLEEQAHIYEVVLAIRAEAVERVEGEEKANTVFIAELSYGGVFTLNGIPDESIEPVLLVECPRLLFPFARTILATVTREGGFPPVQLQPIDFVALWQARRAQQQQETVGNA.

It belongs to the SecB family. Homotetramer, a dimer of dimers. One homotetramer interacts with 1 SecA dimer.

The protein resides in the cytoplasm. In terms of biological role, one of the proteins required for the normal export of preproteins out of the cell cytoplasm. It is a molecular chaperone that binds to a subset of precursor proteins, maintaining them in a translocation-competent state. It also specifically binds to its receptor SecA. The polypeptide is Protein-export protein SecB (Granulibacter bethesdensis (strain ATCC BAA-1260 / CGDNIH1)).